The chain runs to 310 residues: ADP-L-glycero-D-manno-heptose-6-epimerase (310 aa).

Residues 10–11, 31–32, Lys38, Lys53, 75–79, and Asn92 contribute to the NADP(+) site; these read FI, DN, and EGACS. Tyr140 serves as the catalytic Proton acceptor. Lys144 serves as a coordination point for NADP(+). Asn169 lines the substrate pocket. NADP(+) is bound by residues Val170 and Lys178. Lys178 (proton acceptor) is an active-site residue. Residues Ser180, His187, 201 to 204, Arg209, and Tyr272 contribute to the substrate site; that span reads FEGS.

This sequence belongs to the NAD(P)-dependent epimerase/dehydratase family. HldD subfamily. As to quaternary structure, homopentamer. NADP(+) serves as cofactor.

It catalyses the reaction ADP-D-glycero-beta-D-manno-heptose = ADP-L-glycero-beta-D-manno-heptose. It functions in the pathway nucleotide-sugar biosynthesis; ADP-L-glycero-beta-D-manno-heptose biosynthesis; ADP-L-glycero-beta-D-manno-heptose from D-glycero-beta-D-manno-heptose 7-phosphate: step 4/4. Its function is as follows. Catalyzes the interconversion between ADP-D-glycero-beta-D-manno-heptose and ADP-L-glycero-beta-D-manno-heptose via an epimerization at carbon 6 of the heptose. In Klebsiella pneumoniae subsp. pneumoniae (strain ATCC 700721 / MGH 78578), this protein is ADP-L-glycero-D-manno-heptose-6-epimerase.